We begin with the raw amino-acid sequence, 459 residues long: UDP-N-acetylmuramate--L-alanine ligase (459 aa).

Residue 113–119 participates in ATP binding; it reads GSHGKTS.

Belongs to the MurCDEF family.

The protein resides in the cytoplasm. The catalysed reaction is UDP-N-acetyl-alpha-D-muramate + L-alanine + ATP = UDP-N-acetyl-alpha-D-muramoyl-L-alanine + ADP + phosphate + H(+). The protein operates within cell wall biogenesis; peptidoglycan biosynthesis. Cell wall formation. The protein is UDP-N-acetylmuramate--L-alanine ligase of Desulfotalea psychrophila (strain LSv54 / DSM 12343).